Consider the following 253-residue polypeptide: Imidazole glycerol phosphate synthase subunit HisF (253 aa).

Catalysis depends on residues Asp11 and Asp130.

Belongs to the HisA/HisF family. In terms of assembly, heterodimer of HisH and HisF.

The protein resides in the cytoplasm. The enzyme catalyses 5-[(5-phospho-1-deoxy-D-ribulos-1-ylimino)methylamino]-1-(5-phospho-beta-D-ribosyl)imidazole-4-carboxamide + L-glutamine = D-erythro-1-(imidazol-4-yl)glycerol 3-phosphate + 5-amino-1-(5-phospho-beta-D-ribosyl)imidazole-4-carboxamide + L-glutamate + H(+). It functions in the pathway amino-acid biosynthesis; L-histidine biosynthesis; L-histidine from 5-phospho-alpha-D-ribose 1-diphosphate: step 5/9. In terms of biological role, IGPS catalyzes the conversion of PRFAR and glutamine to IGP, AICAR and glutamate. The HisF subunit catalyzes the cyclization activity that produces IGP and AICAR from PRFAR using the ammonia provided by the HisH subunit. This Cereibacter sphaeroides (strain ATCC 17025 / ATH 2.4.3) (Rhodobacter sphaeroides) protein is Imidazole glycerol phosphate synthase subunit HisF.